The following is a 127-amino-acid chain: Thioredoxin-3, mitochondrial (127 aa).

The transit peptide at 1–21 directs the protein to the mitochondrion; the sequence is MLFYKPVMRMAVRPLKSIRFQ. Positions 22-127 constitute a Thioredoxin domain; the sequence is SSYTSITKLT…TALEKGIKDL (106 aa). Catalysis depends on nucleophile residues cysteine 55 and cysteine 58. Cysteines 55 and 58 form a disulfide.

This sequence belongs to the thioredoxin family.

It localises to the mitochondrion. The chain is Thioredoxin-3, mitochondrial (TRX3) from Saccharomyces cerevisiae (strain ATCC 204508 / S288c) (Baker's yeast).